Here is a 171-residue protein sequence, read N- to C-terminus: Small ribosomal subunit protein uS4 (171 aa).

Residues 101-165 enclose the S4 RNA-binding domain; sequence RRLQTVVYRK…SSLSDELHPE (65 aa). Residues 148–171 form a disordered region; the sequence is SSVGFDEHSSLSDELHPERAEAQE. Residues 152-171 are compositionally biased toward basic and acidic residues; the sequence is FDEHSSLSDELHPERAEAQE.

Belongs to the universal ribosomal protein uS4 family. Part of the 30S ribosomal subunit. Contacts protein S5. The interaction surface between S4 and S5 is involved in control of translational fidelity.

Functionally, one of the primary rRNA binding proteins, it binds directly to 16S rRNA where it nucleates assembly of the body of the 30S subunit. With S5 and S12 plays an important role in translational accuracy. This Haloarcula marismortui (strain ATCC 43049 / DSM 3752 / JCM 8966 / VKM B-1809) (Halobacterium marismortui) protein is Small ribosomal subunit protein uS4.